The sequence spans 284 residues: D-tagatose-1,6-bisphosphate aldolase subunit GatY (284 aa).

Asp82 (proton donor) is an active-site residue. 2 residues coordinate Zn(2+): His83 and His180. Residue Gly181 coordinates dihydroxyacetone phosphate. His208 serves as a coordination point for Zn(2+). Residues 209 to 211 and 230 to 233 contribute to the dihydroxyacetone phosphate site; these read GAS and NVAT.

It belongs to the class II fructose-bisphosphate aldolase family. TagBP aldolase GatY subfamily. In terms of assembly, forms a complex with GatZ. Zn(2+) is required as a cofactor.

It catalyses the reaction D-tagatofuranose 1,6-bisphosphate = D-glyceraldehyde 3-phosphate + dihydroxyacetone phosphate. It participates in carbohydrate metabolism; D-tagatose 6-phosphate degradation; D-glyceraldehyde 3-phosphate and glycerone phosphate from D-tagatose 6-phosphate: step 2/2. Its function is as follows. Catalytic subunit of the tagatose-1,6-bisphosphate aldolase GatYZ, which catalyzes the reversible aldol condensation of dihydroxyacetone phosphate (DHAP or glycerone-phosphate) with glyceraldehyde 3-phosphate (G3P) to produce tagatose 1,6-bisphosphate (TBP). Requires GatZ subunit for full activity and stability. Is involved in the catabolism of galactitol. This is D-tagatose-1,6-bisphosphate aldolase subunit GatY from Salmonella enteritidis PT4 (strain P125109).